Reading from the N-terminus, the 773-residue chain is ATP-dependent RNA helicase MAK5 (773 aa).

Over residues 73 to 82 the composition is skewed to basic and acidic residues; the sequence is KDSNKEKVGD. Disordered regions lie at residues 73–99 and 114–144; these read KDSN…ESEL and SAAS…VDED. The segment covering 83-99 has biased composition (acidic residues); that stretch reads DQESVENESGSDSESEL. Thr-135 is modified (phosphothreonine). Ser-138 carries the phosphoserine modification. The short motif at 171–199 is the Q motif element; it reads EWTNLAPLSMTILQSLQNLNFLRPTEIQK. The 198-residue stretch at 202-399 folds into the Helicase ATP-binding domain; the sequence is IPVIMQGVDV…SSSRQVKDRR (198 aa). 215-222 contacts ATP; it reads ASTGSGKT. The DEAD box signature appears at 333–336; the sequence is DEAD. The region spanning 452-615 is the Helicase C-terminal domain; that stretch reads DLYCYYFLTM…STDLNSRSTN (164 aa). A Phosphoserine modification is found at Ser-678.

Belongs to the DEAD box helicase family. DDX24/MAK5 subfamily.

The protein resides in the nucleus. It is found in the nucleolus. The catalysed reaction is ATP + H2O = ADP + phosphate + H(+). In terms of biological role, ATP-binding RNA helicase involved in the biogenesis of 60S ribosomal subunits and is required for the normal formation of 25S and 5.8S rRNAs. Required for the maintenance of dsRNA killer plasmid. This is ATP-dependent RNA helicase MAK5 (MAK5) from Saccharomyces cerevisiae (strain ATCC 204508 / S288c) (Baker's yeast).